A 264-amino-acid polypeptide reads, in one-letter code: Phosphatidylglycerol--prolipoprotein diacylglyceryl transferase (264 aa).

7 consecutive transmembrane segments (helical) span residues 14-34 (IIFS…LIGF), 60-80 (LIYT…VFFY), 98-118 (GGMS…WVSF), 128-148 (ADFI…GNFI), 176-196 (SQLY…NWFI), 203-223 (GSVA…VEYV), and 240-260 (GQLL…WAYS). Residue Arg-143 participates in a 1,2-diacyl-sn-glycero-3-phospho-(1'-sn-glycerol) binding.

Belongs to the Lgt family.

It localises to the cell inner membrane. The catalysed reaction is L-cysteinyl-[prolipoprotein] + a 1,2-diacyl-sn-glycero-3-phospho-(1'-sn-glycerol) = an S-1,2-diacyl-sn-glyceryl-L-cysteinyl-[prolipoprotein] + sn-glycerol 1-phosphate + H(+). It functions in the pathway protein modification; lipoprotein biosynthesis (diacylglyceryl transfer). Its function is as follows. Catalyzes the transfer of the diacylglyceryl group from phosphatidylglycerol to the sulfhydryl group of the N-terminal cysteine of a prolipoprotein, the first step in the formation of mature lipoproteins. This is Phosphatidylglycerol--prolipoprotein diacylglyceryl transferase from Actinobacillus pleuropneumoniae serotype 7 (strain AP76).